A 442-amino-acid polypeptide reads, in one-letter code: tRNA-2-methylthio-N(6)-dimethylallyladenosine synthase (442 aa).

One can recognise an MTTase N-terminal domain in the interval 3-120; it reads KKLYIETHGC…LPEMIDAARI (118 aa). Positions 12, 49, 83, 157, 161, and 164 each coordinate [4Fe-4S] cluster. The region spanning 143–375 is the Radical SAM core domain; sequence RVDGPSAYVS…QHRLNQQGFE (233 aa). One can recognise a TRAM domain in the interval 378 to 442; sequence RQMVGSIQRI…PHSLRGSLLQ (65 aa).

It belongs to the methylthiotransferase family. MiaB subfamily. As to quaternary structure, monomer. [4Fe-4S] cluster serves as cofactor.

It localises to the cytoplasm. The catalysed reaction is N(6)-dimethylallyladenosine(37) in tRNA + (sulfur carrier)-SH + AH2 + 2 S-adenosyl-L-methionine = 2-methylsulfanyl-N(6)-dimethylallyladenosine(37) in tRNA + (sulfur carrier)-H + 5'-deoxyadenosine + L-methionine + A + S-adenosyl-L-homocysteine + 2 H(+). Its function is as follows. Catalyzes the methylthiolation of N6-(dimethylallyl)adenosine (i(6)A), leading to the formation of 2-methylthio-N6-(dimethylallyl)adenosine (ms(2)i(6)A) at position 37 in tRNAs that read codons beginning with uridine. This chain is tRNA-2-methylthio-N(6)-dimethylallyladenosine synthase, found in Pseudomonas savastanoi pv. phaseolicola (strain 1448A / Race 6) (Pseudomonas syringae pv. phaseolicola (strain 1448A / Race 6)).